The sequence spans 328 residues: Tetraacyldisaccharide 4'-kinase (328 aa).

An ATP-binding site is contributed by 55–62 (TAGGNGKT).

This sequence belongs to the LpxK family.

The enzyme catalyses a lipid A disaccharide + ATP = a lipid IVA + ADP + H(+). It functions in the pathway glycolipid biosynthesis; lipid IV(A) biosynthesis; lipid IV(A) from (3R)-3-hydroxytetradecanoyl-[acyl-carrier-protein] and UDP-N-acetyl-alpha-D-glucosamine: step 6/6. Transfers the gamma-phosphate of ATP to the 4'-position of a tetraacyldisaccharide 1-phosphate intermediate (termed DS-1-P) to form tetraacyldisaccharide 1,4'-bis-phosphate (lipid IVA). The polypeptide is Tetraacyldisaccharide 4'-kinase (Escherichia coli O81 (strain ED1a)).